Reading from the N-terminus, the 700-residue chain is ATP-dependent DNA helicase UvrD2 (700 aa).

Residues 10-301 (AGLDDQQREA…VRLERDYRST (292 aa)) enclose the UvrD-like helicase ATP-binding domain. ATP is bound by residues 34 to 39 (GTGKTR) and Arg299. Residues 302-553 (PQVVSLANRV…LYVGITRARV (252 aa)) enclose the UvrD-like helicase C-terminal domain. A disordered region spans residues 565–595 (PGGRQSRKPSRFLNGIAPQTRADPVPGTSRR). An HRDC domain is found at 626–700 (ADVDEELLLQ…DVLQLVRGRT (75 aa)).

This sequence belongs to the helicase family. UvrD subfamily. Mg(2+) serves as cofactor.

The enzyme catalyses Couples ATP hydrolysis with the unwinding of duplex DNA by translocating in the 3'-5' direction.. It catalyses the reaction ATP + H2O = ADP + phosphate + H(+). In terms of biological role, DNA-dependent ATPase, stimulated equally by ss- and dsDNA. Has both ATPase and helicase activities. This Mycobacterium bovis (strain ATCC BAA-935 / AF2122/97) protein is ATP-dependent DNA helicase UvrD2 (uvrD2).